A 124-amino-acid polypeptide reads, in one-letter code: Large ribosomal subunit protein bL19 (124 aa).

Belongs to the bacterial ribosomal protein bL19 family.

This protein is located at the 30S-50S ribosomal subunit interface and may play a role in the structure and function of the aminoacyl-tRNA binding site. This is Large ribosomal subunit protein bL19 from Dinoroseobacter shibae (strain DSM 16493 / NCIMB 14021 / DFL 12).